Consider the following 83-residue polypeptide: MSSGGLLLLLGLLTLWEALTPVSSTDRPEFCELPEDSGPCKGLFHVFYYNSDQNQRLEFIYGGCYGNANNFKTIEECKRTCAA.

The N-terminal stretch at 1-24 is a signal peptide; sequence MSSGGLLLLLGLLTLWEALTPVSS. The BPTI/Kunitz inhibitor domain occupies 31–81; that stretch reads CELPEDSGPCKGLFHVFYYNSDQNQRLEFIYGGCYGNANNFKTIEECKRTC. Cystine bridges form between Cys-31-Cys-81 and Cys-40-Cys-64.

This sequence belongs to the venom Kunitz-type family. As to expression, expressed by the venom gland.

The protein resides in the secreted. Serine protease inhibitor. This is Kunitz-type serine protease inhibitor nigrescinin-3 from Cryptophis nigrescens (Eastern small-eyed snake).